A 361-amino-acid polypeptide reads, in one-letter code: Ribosomal RNA large subunit methyltransferase M (361 aa).

S-adenosyl-L-methionine contacts are provided by residues S187, 220 to 223, D239, D259, and D276; that span reads CPGG. K305 functions as the Proton acceptor in the catalytic mechanism.

It belongs to the class I-like SAM-binding methyltransferase superfamily. RNA methyltransferase RlmE family. RlmM subfamily. As to quaternary structure, monomer.

The protein localises to the cytoplasm. It catalyses the reaction cytidine(2498) in 23S rRNA + S-adenosyl-L-methionine = 2'-O-methylcytidine(2498) in 23S rRNA + S-adenosyl-L-homocysteine + H(+). Its function is as follows. Catalyzes the 2'-O-methylation at nucleotide C2498 in 23S rRNA. The sequence is that of Ribosomal RNA large subunit methyltransferase M from Shewanella sp. (strain ANA-3).